The following is a 127-amino-acid chain: Small ribosomal subunit protein bS6 (127 aa).

Residues 104 to 127 (QGAEKGKSSRKEKVAAEAEASEEA) are disordered. Residues 107 to 119 (EKGKSSRKEKVAA) show a composition bias toward basic and acidic residues.

Belongs to the bacterial ribosomal protein bS6 family.

Binds together with bS18 to 16S ribosomal RNA. The chain is Small ribosomal subunit protein bS6 from Coxiella burnetii (strain CbuG_Q212) (Coxiella burnetii (strain Q212)).